We begin with the raw amino-acid sequence, 201 residues long: Recombination protein RecR (201 aa).

Residues 59-74 form a C4-type zinc finger; it reads CEICGNMDTENICRIC. The region spanning 82–177 is the Toprim domain; that stretch reads SIIAIVETVA…KISRLASGIP (96 aa).

It belongs to the RecR family.

Its function is as follows. May play a role in DNA repair. It seems to be involved in an RecBC-independent recombinational process of DNA repair. It may act with RecF and RecO. The protein is Recombination protein RecR of Rickettsia peacockii (strain Rustic).